The chain runs to 369 residues: GDSL esterase/lipase At5g41890 (369 aa).

The active-site Nucleophile is the Ser32. Active-site residues include Asp334 and His337.

The protein belongs to the 'GDSL' lipolytic enzyme family.

The polypeptide is GDSL esterase/lipase At5g41890 (Arabidopsis thaliana (Mouse-ear cress)).